The following is a 464-amino-acid chain: Hepatocyte nuclear factor 4-alpha (464 aa).

The segment at residues 57–132 (NSLCAICGDR…AGMKKEAVQN (76 aa)) is a DNA-binding region (nuclear receptor). 2 NR C4-type zinc fingers span residues 60–80 (CAIC…CDGC) and 96–120 (CRFS…LKKC). The 230-residue stretch at 147–376 (SSLPSINVLI…NLLQEMLLGG (230 aa)) folds into the NR LBD domain. The 9aaTAD motif lies at 367–375 (NLLQEMLLG). A compositionally biased stretch (polar residues) spans 410–421 (SQLHNGQMSTPE). The tract at residues 410-433 (SQLHNGQMSTPETPQPSPPAGSGA) is disordered.

It belongs to the nuclear hormone receptor family. NR2 subfamily. Homodimerization is required for HNF4-alpha to bind to its recognition site. In terms of tissue distribution, expressed in liver and kidney.

Its subcellular location is the nucleus. In terms of biological role, transcriptional regulator; binds and activates the promoter for the HNF1-alpha gene. Potential initiator of a transcriptional cascade within a subset of cells committed to a specific developmental program. Could be a determinant for asymmetry in early development. May play a role in the regulation of the circadian clock. The polypeptide is Hepatocyte nuclear factor 4-alpha (hnf4a) (Xenopus laevis (African clawed frog)).